The chain runs to 266 residues: 4-hydroxy-tetrahydrodipicolinate reductase (266 aa).

NAD(+)-binding positions include 8–13 (GAAGRM) and Glu33. NADP(+) is bound at residue Arg34. NAD(+) contacts are provided by residues 97-99 (GST) and 121-124 (APNM). His154 serves as the catalytic Proton donor/acceptor. Position 155 (His155) interacts with (S)-2,3,4,5-tetrahydrodipicolinate. Lys158 acts as the Proton donor in catalysis. 164-165 (GT) lines the (S)-2,3,4,5-tetrahydrodipicolinate pocket.

Belongs to the DapB family.

It localises to the cytoplasm. It carries out the reaction (S)-2,3,4,5-tetrahydrodipicolinate + NAD(+) + H2O = (2S,4S)-4-hydroxy-2,3,4,5-tetrahydrodipicolinate + NADH + H(+). The catalysed reaction is (S)-2,3,4,5-tetrahydrodipicolinate + NADP(+) + H2O = (2S,4S)-4-hydroxy-2,3,4,5-tetrahydrodipicolinate + NADPH + H(+). It participates in amino-acid biosynthesis; L-lysine biosynthesis via DAP pathway; (S)-tetrahydrodipicolinate from L-aspartate: step 4/4. In terms of biological role, catalyzes the conversion of 4-hydroxy-tetrahydrodipicolinate (HTPA) to tetrahydrodipicolinate. The protein is 4-hydroxy-tetrahydrodipicolinate reductase of Geobacter sulfurreducens (strain ATCC 51573 / DSM 12127 / PCA).